A 369-amino-acid polypeptide reads, in one-letter code: Protein-glutamate methylesterase/protein-glutamine glutaminase 1 (369 aa).

Residues 11-128 enclose the Response regulatory domain; that stretch reads RVLIVDDSAA…DLERQEASIR (118 aa). At Asp-62 the chain carries 4-aspartylphosphate. Residues 136–168 form a disordered region; it reads ATETTRRRSQPEPRPLAPGPKLTADEILPARPP. One can recognise a CheB-type methylesterase domain in the interval 170 to 358; that stretch reads PVPETMPVVC…LDRLAARIME (189 aa). Residues Ser-183, His-209, and Asp-305 contribute to the active site.

The protein belongs to the CheB family. Phosphorylated by CheA. Phosphorylation of the N-terminal regulatory domain activates the methylesterase activity.

Its subcellular location is the cytoplasm. It carries out the reaction [protein]-L-glutamate 5-O-methyl ester + H2O = L-glutamyl-[protein] + methanol + H(+). The enzyme catalyses L-glutaminyl-[protein] + H2O = L-glutamyl-[protein] + NH4(+). Involved in chemotaxis. Part of a chemotaxis signal transduction system that modulates chemotaxis in response to various stimuli. Catalyzes the demethylation of specific methylglutamate residues introduced into the chemoreceptors (methyl-accepting chemotaxis proteins or MCP) by CheR. Also mediates the irreversible deamidation of specific glutamine residues to glutamic acid. This is Protein-glutamate methylesterase/protein-glutamine glutaminase 1 from Cereibacter sphaeroides (strain ATCC 17023 / DSM 158 / JCM 6121 / CCUG 31486 / LMG 2827 / NBRC 12203 / NCIMB 8253 / ATH 2.4.1.) (Rhodobacter sphaeroides).